The primary structure comprises 215 residues: 3-isopropylmalate dehydratase small subunit (215 aa).

This sequence belongs to the LeuD family. LeuD type 1 subfamily. As to quaternary structure, heterodimer of LeuC and LeuD.

The enzyme catalyses (2R,3S)-3-isopropylmalate = (2S)-2-isopropylmalate. It participates in amino-acid biosynthesis; L-leucine biosynthesis; L-leucine from 3-methyl-2-oxobutanoate: step 2/4. Its function is as follows. Catalyzes the isomerization between 2-isopropylmalate and 3-isopropylmalate, via the formation of 2-isopropylmaleate. The sequence is that of 3-isopropylmalate dehydratase small subunit (leuD) from Azotobacter vinelandii.